A 614-amino-acid polypeptide reads, in one-letter code: 1-deoxy-D-xylulose-5-phosphate synthase (614 aa).

Thiamine diphosphate is bound by residues H74 and 115–117 (GHS). D146 is a binding site for Mg(2+). Thiamine diphosphate contacts are provided by residues 147–148 (GA), N175, Y282, and E363. N175 is a Mg(2+) binding site.

Belongs to the transketolase family. DXPS subfamily. In terms of assembly, homodimer. The cofactor is Mg(2+). It depends on thiamine diphosphate as a cofactor.

The catalysed reaction is D-glyceraldehyde 3-phosphate + pyruvate + H(+) = 1-deoxy-D-xylulose 5-phosphate + CO2. It functions in the pathway metabolic intermediate biosynthesis; 1-deoxy-D-xylulose 5-phosphate biosynthesis; 1-deoxy-D-xylulose 5-phosphate from D-glyceraldehyde 3-phosphate and pyruvate: step 1/1. Functionally, catalyzes the acyloin condensation reaction between C atoms 2 and 3 of pyruvate and glyceraldehyde 3-phosphate to yield 1-deoxy-D-xylulose-5-phosphate (DXP). The polypeptide is 1-deoxy-D-xylulose-5-phosphate synthase (Methylobacillus flagellatus (strain ATCC 51484 / DSM 6875 / VKM B-1610 / KT)).